Here is a 104-residue protein sequence, read N- to C-terminus: Large ribosomal subunit protein uL24 (104 aa).

A disordered region spans residues 41-61 (ISKKHKKPTPNEKQSGGIFEK).

Belongs to the universal ribosomal protein uL24 family. As to quaternary structure, part of the 50S ribosomal subunit.

Its function is as follows. One of two assembly initiator proteins, it binds directly to the 5'-end of the 23S rRNA, where it nucleates assembly of the 50S subunit. In terms of biological role, one of the proteins that surrounds the polypeptide exit tunnel on the outside of the subunit. The polypeptide is Large ribosomal subunit protein uL24 (Wigglesworthia glossinidia brevipalpis).